The sequence spans 383 residues: tRNA(Met) cytidine acetate ligase (383 aa).

Residues 7-20, Gly-101, Asn-153, and 178-179 contribute to the ATP site; these read IAEF…HEFL and RI.

It belongs to the TmcAL family.

Its subcellular location is the cytoplasm. The catalysed reaction is cytidine(34) in elongator tRNA(Met) + acetate + ATP = N(4)-acetylcytidine(34) in elongator tRNA(Met) + AMP + diphosphate. Its function is as follows. Catalyzes the formation of N(4)-acetylcytidine (ac(4)C) at the wobble position of elongator tRNA(Met), using acetate and ATP as substrates. First activates an acetate ion to form acetyladenylate (Ac-AMP) and then transfers the acetyl group to tRNA to form ac(4)C34. The chain is tRNA(Met) cytidine acetate ligase from Lactobacillus acidophilus (strain ATCC 700396 / NCK56 / N2 / NCFM).